Here is a 331-residue protein sequence, read N- to C-terminus: Methionyl-tRNA formyltransferase (331 aa).

111–114 is a binding site for (6S)-5,6,7,8-tetrahydrofolate; that stretch reads SLLP.

Belongs to the Fmt family.

The enzyme catalyses L-methionyl-tRNA(fMet) + (6R)-10-formyltetrahydrofolate = N-formyl-L-methionyl-tRNA(fMet) + (6S)-5,6,7,8-tetrahydrofolate + H(+). In terms of biological role, attaches a formyl group to the free amino group of methionyl-tRNA(fMet). The formyl group appears to play a dual role in the initiator identity of N-formylmethionyl-tRNA by promoting its recognition by IF2 and preventing the misappropriation of this tRNA by the elongation apparatus. This Thermosynechococcus vestitus (strain NIES-2133 / IAM M-273 / BP-1) protein is Methionyl-tRNA formyltransferase.